Consider the following 226-residue polypeptide: PKHD-type hydroxylase PSPA7_5129 (226 aa).

The Fe2OG dioxygenase domain maps to 78–178 (KVFPPLFNCY…RYASFFWTQS (101 aa)). Residues His96, Asp98, and His159 each contribute to the Fe cation site. Residue Arg169 participates in 2-oxoglutarate binding.

Requires Fe(2+) as cofactor. L-ascorbate serves as cofactor.

The protein is PKHD-type hydroxylase PSPA7_5129 of Pseudomonas paraeruginosa (strain DSM 24068 / PA7) (Pseudomonas aeruginosa (strain PA7)).